The primary structure comprises 620 residues: MVKETPLHSSSSTSLSSLFRPTKLKNLSAKIFNGGGNQSYSKTDDVSRSSSRSSKKNTDSDQEDQIKYNKPNDRRSTIGKSPQGNGALSKESHVVASSTLTGISPTSAKKAPIDYSPSRPLPNNHNPVRTGHTVPHLPHSIHNPINYIHQGSKDAFHHPHPVRSTAHSNISTVSSAKSDTPSSNLSYQAHMHPVEILQKQIEDKHFMDSQASTPGSVELQHNSSSGSDDTSSRKKKSLRLTRFFKKIHNDYHDNHHHHHHHNRGSTPTKPKLNLNTNENIVESNGKALYETDNPVELLEKYGIPGRKLGEGASGSVSVVERTDGKLFACKMFRKPHLNNEGTNQSQLANYSKKVTTEFCIGSTLHHENIVETLDMLTEGDTYLLVMEYAPYDFFNLVMSNLMTQDEVNCYFKQLCHGVNYLHSMGLAHRDLKLDNCVVTKDGILKLIDFGSAVVFQYPYEDTIVKSHGIVGSDPYLAPELLKQTSYDPRVADVWSIAIIFYCMVLKRFPWKAPKKSFNSFRLFTEEPEDEDDIVRGPNKILRLLPRHSRTIIGRMLALEPKQRVLMNDVVKDDWLVSVPSCEVDPTSGDLVEKPKNHKHHLVTEEELNELTKQHGNKDSN.

Disordered regions lie at residues 1–20 (MVKETPLHSSSSTSLSSLFR), 29–130 (AKIF…PVRT), 153–186 (KDAFHHPHPVRSTAHSNISTVSSAKSDTPSSNLS), 210–237 (QASTPGSVELQHNSSSGSDDTSSRKKKS), and 252–271 (HDNHHHHHHHNRGSTPTKPK). A compositionally biased stretch (low complexity) spans 7-18 (LHSSSSTSLSSL). The span at 56–76 (KNTDSDQEDQIKYNKPNDRRS) shows a compositional bias: basic and acidic residues. Thr-58 bears the Phosphothreonine mark. Phosphoserine is present on Ser-60. 3 stretches are compositionally biased toward polar residues: residues 95-107 (VASSTLTGISPTS), 165-186 (TAHSNISTVSSAKSDTPSSNLS), and 210-222 (QASTPGSVELQHN). Phosphoserine is present on Ser-216. The segment covering 254–263 (NHHHHHHHNR) has biased composition (basic residues). In terms of domain architecture, Protein kinase spans 302–575 (GIPGRKLGEG…MNDVVKDDWL (274 aa)). Residues 308–316 (LGEGASGSV) and Lys-330 each bind ATP. Residue Lys-334 forms a Glycyl lysine isopeptide (Lys-Gly) (interchain with G-Cter in ubiquitin) linkage. The Proton acceptor role is filled by Asp-430.

The protein belongs to the protein kinase superfamily. Ser/Thr protein kinase family. As to quaternary structure, interacts with ribosome biogenesis factors ARC1, CKA2 and GUS1.

It carries out the reaction L-seryl-[protein] + ATP = O-phospho-L-seryl-[protein] + ADP + H(+). It catalyses the reaction L-threonyl-[protein] + ATP = O-phospho-L-threonyl-[protein] + ADP + H(+). Probable serine/threonine-protein kinase that may be involved in ribosome biogenesis. The sequence is that of Probable serine/threonine-protein kinase RTK1 (RTK1) from Saccharomyces cerevisiae (strain ATCC 204508 / S288c) (Baker's yeast).